The chain runs to 277 residues: Indole-3-glycerol phosphate synthase (277 aa).

Belongs to the TrpC family.

The enzyme catalyses 1-(2-carboxyphenylamino)-1-deoxy-D-ribulose 5-phosphate + H(+) = (1S,2R)-1-C-(indol-3-yl)glycerol 3-phosphate + CO2 + H2O. Its pathway is amino-acid biosynthesis; L-tryptophan biosynthesis; L-tryptophan from chorismate: step 4/5. This chain is Indole-3-glycerol phosphate synthase, found in Pseudomonas putida (strain GB-1).